A 133-amino-acid polypeptide reads, in one-letter code: Snaclec purpureotin subunit alpha (133 aa).

3 cysteine pairs are disulfide-bonded: Cys-2-Cys-13, Cys-30-Cys-127, and Cys-102-Cys-119. Residues 9–128 (FKQYCYQIIK…CEQKHIFMCK (120 aa)) form the C-type lectin domain.

Belongs to the snaclec family. As to quaternary structure, homodimer (non-covalently linked) of heterodimer of alpha and beta subunits (disulfide-linked). In terms of tissue distribution, expressed by the venom gland.

It is found in the secreted. Functionally, snaclec that induces platelet aggregation without any cofactor in a dose-dependent manner. Its platelet aggregation effect is blocked by echicetin, suggesting it is a GPIb-binding protein which binds to the same or a closely related GPIb site on platelets as echicetin. The chain is Snaclec purpureotin subunit alpha from Trimeresurus purpureomaculatus (Mangrove pit viper).